Consider the following 189-residue polypeptide: Probable nicotinate-nucleotide adenylyltransferase (189 aa).

It belongs to the NadD family.

The enzyme catalyses nicotinate beta-D-ribonucleotide + ATP + H(+) = deamido-NAD(+) + diphosphate. It participates in cofactor biosynthesis; NAD(+) biosynthesis; deamido-NAD(+) from nicotinate D-ribonucleotide: step 1/1. In terms of biological role, catalyzes the reversible adenylation of nicotinate mononucleotide (NaMN) to nicotinic acid adenine dinucleotide (NaAD). This is Probable nicotinate-nucleotide adenylyltransferase from Bacillus mycoides (strain KBAB4) (Bacillus weihenstephanensis).